Here is a 246-residue protein sequence, read N- to C-terminus: tRNA pseudouridine synthase A (246 aa).

Asp-52 (nucleophile) is an active-site residue. Tyr-111 is a binding site for substrate.

The protein belongs to the tRNA pseudouridine synthase TruA family. Homodimer.

The enzyme catalyses uridine(38/39/40) in tRNA = pseudouridine(38/39/40) in tRNA. Its function is as follows. Formation of pseudouridine at positions 38, 39 and 40 in the anticodon stem and loop of transfer RNAs. The chain is tRNA pseudouridine synthase A from Ehrlichia ruminantium (strain Welgevonden).